Consider the following 116-residue polypeptide: Large ribosomal subunit protein bL20 (116 aa).

The protein belongs to the bacterial ribosomal protein bL20 family.

Binds directly to 23S ribosomal RNA and is necessary for the in vitro assembly process of the 50S ribosomal subunit. It is not involved in the protein synthesizing functions of that subunit. In Phocaeicola vulgatus (strain ATCC 8482 / DSM 1447 / JCM 5826 / CCUG 4940 / NBRC 14291 / NCTC 11154) (Bacteroides vulgatus), this protein is Large ribosomal subunit protein bL20.